We begin with the raw amino-acid sequence, 2227 residues long: Genome polyprotein (2227 aa).

2 consecutive short sequence motifs ((L)YPX(n)L motif) follow at residues 167–171 (YPHGL) and 200–205 (YPVWEL). The interval 766–836 (MMSRIAAGDL…PRKMKGLFSQ (71 aa)) is involved in P1-2A pentamerization. Residues 1010-1030 (VTVEIINTVLCFVKSGILLYV) form a helical membrane-spanning segment. The membrane-penetrating ability stretch occupies residues 1043–1070 (IGLLRVMNYADIGCSVISCGKVFSKMLE). The stretch at 1127 to 1152 (KKKDVLNVLKDNQQKIERAIEEADNF) forms a coiled coil. The SF3 helicase domain maps to 1204-1366 (HQKLKNLGSI…SFFKNPHNDM (163 aa)). ATP is bound at residue 1230–1237 (GKRGGGKS). Residues 1462 to 1482 (WVAVGAAVGILGVLVGGWFVY) traverse the membrane as a helical segment. Tyr-1499 carries the post-translational modification O-(5'-phospho-RNA)-tyrosine. Positions 1514 to 1728 (DPVESQSTLE…VAKLVTQEMF (215 aa)) constitute a Peptidase C3 domain. Residues His-1563, Asp-1603, and Cys-1691 each act as for protease 3C activity in the active site. The RdRp catalytic domain maps to 1976-2097 (DVGLDLDFSA…VFSRDIQIDN (122 aa)). The active-site For RdRp activity is Asp-2083.

Belongs to the picornaviridae polyprotein family. In terms of assembly, homodimer. Homomultimer; probably interacts with membranes in a multimeric form. Seems to assemble into amyloid-like fibers. Homodimer. Monomer. Interacts with protein 3CD. As to quaternary structure, interacts with host ACBD3. In terms of assembly, interacts with protein 3AB. Interacts with human MAVS. As to quaternary structure, homodimer; disulfide-linked. In terms of assembly, homopentamer. Homooligomer. Interacts with capsid protein VP2. Interacts with capsid protein VP3. As to quaternary structure, interacts with capsid protein VP1. Interacts with capsid protein VP3. In terms of assembly, interacts with capsid protein VP1. Interacts with capsid protein VP2. In terms of processing, specific enzymatic cleavages by viral protease in vivo yield a variety of precursors and mature proteins. Polyprotein processing intermediates are produced, such as P1-2A which is a functional precursor of the structural proteins, VP0 which is a VP4-VP2 precursor, VP1-2A precursor, 3ABC precursor which is a stable and catalytically active precursor of 3A, 3B and 3C proteins, 3AB and 3CD precursors. The assembly signal 2A is removed from VP1-2A by a host protease, possibly host Cathepsin L. This cleavage occurs over a region of 3 amino-acids probably generating VP1 proteins with heterogeneous C-termini. Post-translationally, during virion maturation, immature virions are rendered infectious following cleavage of VP0 into VP4 and VP2. This maturation seems to be an autocatalytic event triggered by the presence of RNA in the capsid and is followed by a conformational change of the particle. The assembly signal 2A is removed from VP1-2A by a host protease, possibly host Cathepsin L in naked virions. This cleavage does not occur in enveloped virions. This cleavage occurs over a region of 3 amino-acids probably generating VP1 proteins with heterogeneous C-termini. In terms of processing, VPg is uridylylated prior to priming replication into VPg-pUpU. Post-translationally, unlike other picornaviruses, does not seem to be myristoylated.

The protein localises to the virion. Its subcellular location is the host endosome. It localises to the host multivesicular body. It is found in the host membrane. The protein resides in the host mitochondrion outer membrane. The protein localises to the host cytoplasm. Its subcellular location is the host cytoplasmic vesicle membrane. The enzyme catalyses RNA(n) + a ribonucleoside 5'-triphosphate = RNA(n+1) + diphosphate. It catalyses the reaction a ribonucleoside 5'-triphosphate + H2O = a ribonucleoside 5'-diphosphate + phosphate + H(+). The catalysed reaction is Selective cleavage of Gln-|-Gly bond in the poliovirus polyprotein. In other picornavirus reactions Glu may be substituted for Gln, and Ser or Thr for Gly.. Functionally, capsid proteins VP1, VP2, and VP3 form a closed capsid enclosing the viral positive strand RNA genome. All these proteins contain a beta-sheet structure called beta-barrel jelly roll. Together they form an icosahedral capsid (T=3) composed of 60 copies of each VP1, VP2, and VP3, with a diameter of approximately 300 Angstroms. VP1 is situated at the 12 fivefold axes, whereas VP2 and VP3 are located at the quasi-sixfold axes. The naked capsid interacts with the host receptor HAVCR1 to provide virion attachment to and probably entry into the target cell. Its function is as follows. VP0 precursor is a component of the immature procapsids. In terms of biological role, plays a role in the assembly of the 12 pentamers into an icosahedral structure. Has not been detected in mature virions, supposedly owing to its small size. Precursor component of immature procapsids that corresponds to an extended form of the structural protein VP1. After maturation, possibly by the host Cathepsin L, the assembly signal 2A is cleaved to give rise to the mature VP1 protein. Functionally, functions as a viroporin. Affects membrane integrity and causes an increase in membrane permeability. Involved in host intracellular membrane rearrangements probably to give rise to the viral factories. Does not disrupt calcium homeostasis or glycoprotein trafficking. Antagonizes the innate immune response of the host by suppressing IFN-beta synthesis, which it achieves by interfering with the RIG-I/IFIH1 pathway. Its function is as follows. Affects membrane integrity and causes an increase in membrane permeability. In terms of biological role, associates with and induces structural rearrangements of intracellular membranes. Displays RNA-binding activity. The precursor 3ABC is targeted to the mitochondrial membrane where protease 3C activity cleaves and inhibits the host antiviral protein MAVS, thereby disrupting activation of IRF3 through the IFIH1/MDA5 pathway. In vivo, the protease activity of 3ABC precursor is more efficient in cleaving the 2BC precursor than that of protein 3C. The 3ABC precursor may therefore play a role in the proteolytic processing of the polyprotein. Possible viroporin. Functionally, interacts with the 3CD precursor and with RNA structures found at both the 5'- and 3'-termini of the viral genome. Since the 3AB precursor contains the hydrophobic domain 3A, it probably anchors the whole viral replicase complex to intracellular membranes on which viral RNA synthesis occurs. Its function is as follows. May serve as membrane anchor to the 3AB and 3ABC precursors via its hydrophobic domain. May interact with RNA. In terms of biological role, acts as a primer for viral RNA replication and remains covalently bound to viral genomic RNA. VPg is uridylylated prior to priming replication into VPg-pUpU. The VPg-pUpU is then used as primer on the genomic RNA poly(A) by the RNA-dependent RNA polymerase to replicate the viral genome. Cysteine protease that generates mature viral proteins from the precursor polyprotein. In addition to its proteolytic activity, it binds to viral RNA, and thus influences viral genome replication. RNA and substrate bind cooperatively to the protease. Cleaves IKBKG/NEMO to impair innate immune signaling. Cleaves host PABPC1 which may participate in the switch of viral translation to RNA synthesis. Functionally, interacts with the 3AB precursor and with RNA structures found at both the 5'- and 3'-termini of the viral genome. Disrupts TLR3 signaling by degrading the host adapter protein TICAM1/TRIF. Its function is as follows. RNA-directed RNA polymerase 3D-POL replicates genomic and antigenomic RNA by recognizing replications specific signals. In Human hepatitis A virus genotype IIB (isolate SLF88) (HHAV), this protein is Genome polyprotein.